A 772-amino-acid chain; its full sequence is 5-methyltetrahydropteroyltriglutamate--homocysteine methyltransferase (772 aa).

5-methyltetrahydropteroyltri-L-glutamate-binding positions include 24 to 27 and lysine 120; that span reads RELK. Residues 404-428 form a disordered region; it reads DPAVRSRTAATTDADARRSGPYPER. L-homocysteine contacts are provided by residues 446–448 and glutamate 499; that span reads IGS. L-methionine is bound by residues 446-448 and glutamate 499; that span reads IGS. Residue tryptophan 576 participates in 5-methyltetrahydropteroyltri-L-glutamate binding. Position 614 (aspartate 614) interacts with L-homocysteine. Aspartate 614 lines the L-methionine pocket. Glutamate 620 serves as a coordination point for 5-methyltetrahydropteroyltri-L-glutamate. Zn(2+) is bound by residues histidine 656, cysteine 658, and glutamate 680. Histidine 709 functions as the Proton donor in the catalytic mechanism. Cysteine 741 lines the Zn(2+) pocket.

The protein belongs to the vitamin-B12 independent methionine synthase family. It depends on Zn(2+) as a cofactor.

It carries out the reaction 5-methyltetrahydropteroyltri-L-glutamate + L-homocysteine = tetrahydropteroyltri-L-glutamate + L-methionine. It functions in the pathway amino-acid biosynthesis; L-methionine biosynthesis via de novo pathway; L-methionine from L-homocysteine (MetE route): step 1/1. In terms of biological role, catalyzes the transfer of a methyl group from 5-methyltetrahydrofolate to homocysteine resulting in methionine formation. This chain is 5-methyltetrahydropteroyltriglutamate--homocysteine methyltransferase, found in Streptomyces avermitilis (strain ATCC 31267 / DSM 46492 / JCM 5070 / NBRC 14893 / NCIMB 12804 / NRRL 8165 / MA-4680).